We begin with the raw amino-acid sequence, 187 residues long: Pumilio homolog 26 (187 aa).

The Pumilio 1; degenerate repeat unit spans residues 20 to 42 (VATEFLRVSNDVAELHKLSSKLT). One copy of the Pumilio 2; degenerate repeat lies at 43 to 78 (SDPYLFVEFVKTIRGFLSVQTALGLSGEIDTVFLQV). A Pumilio 3; degenerate repeat occupies 79-116 (IKGWFPDLITETFSFLIVVRIINLFNKRANSKVYPDIL). The Pumilio 4; degenerate repeat unit spans residues 117–154 (RRIGNNALYLTRNPLRGICLVEKAINVRDPDCTVFIAL). A Pumilio 5 repeat occupies 155-187 (KLHSHYVELSFEELGSNIVEKLLSVGESGICGV).

It localises to the cytoplasm. In terms of biological role, sequence-specific RNA-binding protein that regulates translation and mRNA stability by binding the 3'-UTR of target mRNAs. The polypeptide is Pumilio homolog 26 (APUM26) (Arabidopsis thaliana (Mouse-ear cress)).